A 275-amino-acid polypeptide reads, in one-letter code: Glutamate racemase (275 aa).

Substrate is bound by residues 10-11 and 42-43; these read DS and YG. The Proton donor/acceptor role is filled by C74. 75–76 lines the substrate pocket; that stretch reads NT. C189 acts as the Proton donor/acceptor in catalysis. 190–191 provides a ligand contact to substrate; sequence TH.

It belongs to the aspartate/glutamate racemases family.

It carries out the reaction L-glutamate = D-glutamate. The protein operates within cell wall biogenesis; peptidoglycan biosynthesis. Provides the (R)-glutamate required for cell wall biosynthesis. This chain is Glutamate racemase, found in Bartonella tribocorum (strain CIP 105476 / IBS 506).